Consider the following 348-residue polypeptide: 3',5'-cyclic-nucleotide phosphodiesterase (348 aa).

The cofactor is Mn(2+).

It carries out the reaction a nucleoside 3',5'-cyclic phosphate + H2O = a nucleoside 5'-phosphate + H(+). Hydrolyzes cAMP to 5'-AMP and cGMP to 5'-GMP. Does not show phosphohydrolase activity toward various phosphatidylcholine and phosphorylated sugars. This is 3',5'-cyclic-nucleotide phosphodiesterase from Helicobacter pylori (strain ATCC 700392 / 26695) (Campylobacter pylori).